Reading from the N-terminus, the 224-residue chain is MVQCLVVDDDSRILNYIASHLQTEHIDAYTQPSGEAALKLLEKQRVDIAVIDIMMDGMDGFQLCNTLKNDYDIPVIMLTARDALSDKERAFISGTDDYVTKPFEVKELIFRIRAVLRRYNINSNSEMTIGNLTLNQSYLELQVSNKTMTLPNKEFQLLFMLATRPKQIFTREQIIEKIWGYDYEGDERTVDVHIKRLRQRLKKLNATLTIETVRGQGYKVENHV.

Positions Q3–L116 constitute a Response regulatory domain. At D52 the chain carries 4-aspartylphosphate. Residues N124 to N222 constitute a DNA-binding region (ompR/PhoB-type).

Post-translationally, phosphorylated by HssS.

It is found in the cytoplasm. Its function is as follows. Member of the two-component regulatory system HssS/HssR involved in intracellular heme homeostasis and tempering of staphylococcal virulence. Phosphorylated HssR binds to a direct repeat sequence within hrtAB promoter and activates the expression of hrtAB, an efflux pump, in response to extracellular heme, hemin, hemoglobin or blood. The sequence is that of Heme response regulator HssR (hssR) from Staphylococcus aureus (strain bovine RF122 / ET3-1).